A 467-amino-acid polypeptide reads, in one-letter code: Transcriptional modulator WTM2 (467 aa).

The segment covering 1–12 (MAKSKSSQGASG) has biased composition (low complexity). Disordered stretches follow at residues 1-22 (MAKSKSSQGASGARRKPAPSLY) and 84-121 (TFYDDDDDDDNDDDDEEGNGKTKSAATPNPEYGDAFQD). A compositionally biased stretch (acidic residues) spans 87–100 (DDDDDDDNDDDDEE). 3 WD repeats span residues 244 to 282 (PGTNVAHSVRFFNNHLFASCSDDNILRFWDTRTADKPLW), 287 to 327 (PKNG…LATT), and 349 to 389 (SGGD…SRND).

Transcriptional modulator with roles in meiotic regulation and silencing. In Saccharomyces cerevisiae (strain ATCC 204508 / S288c) (Baker's yeast), this protein is Transcriptional modulator WTM2 (WTM2).